The sequence spans 788 residues: MGSTDSKLNFRKAVIQLTTKTQPVEATDDAFWDQFWADTATSVQDVFALVPAAEIRAVREESPSNLATLCYKAVEKLVQGAESGCHSEKEKQIVLNCSRLLTRVLPYIFEDPDWRGFFWSTVPGAGRGGQGEEDDEHARPLAESLLLAIADLLFCPDFTVQSHRRSTVDSAEDVHSLDSCEYIWEAGVGFAHSPQPNYIHDMNRMELLKLLLTCFSEAMYLPPAPESGSTNPWVQFFCSTENRHALPLFTSLLNTVCAYDPVGYGIPYNHLLFSDYREPLVEEAAQVLIVTLDHDSASSASPTVDGTTTGTAMDDADPPGPENLFVNYLSRIHREEDFQFILKGIARLLSNPLLQTYLPNSTKKIQFHQELLVLFWKLCDFNKKFLFFVLKSSDVLDILVPILFFLNDARADQSRVGLMHIGVFILLLLSGERNFGVRLNKPYSIRVPMDIPVFTGTHADLLIVVFHKIITSGHQRLQPLFDCLLTIVVNVSPYLKSLSMVTANKLLHLLEAFSTTWFLFSAAQNHHLVFFLLEVFNNIIQYQFDGNSNLVYAIIRKRSIFHQLANLPTDPPTIHKALQRRRRTPEPLSRTGSQEGTSMEGSRPAAPAEPGTLKTSLVATPGIDKLTEKSQVSEDGTLRSLEPEPQQSLEDGSPAKGEPSQAWREQRRPSTSSASGQWSPTPEWVLSWKSKLPLQTIMRLLQVLVPQVEKICIDKGLTDESEILRFLQHGTLVGLLPVPHPILIRKYQANSGTAMWFRTYMWGVIYLRNVDPPVWYDTDVKLFEIQRV.

G2 carries N-myristoyl glycine lipidation. 2 disordered regions span residues 297-316 (ASSA…MDDA) and 571-681 (PPTI…WSPT). The span at 590–600 (RTGSQEGTSME) shows a compositional bias: polar residues. Phosphoserine is present on residues S653 and S670. Over residues 669 to 680 (PSTSSASGQWSP) the composition is skewed to polar residues.

It belongs to the hid-1 family. In terms of tissue distribution, expressed in heart, skeletal muscle, colon, spleen, kidney, liver, small intestine and lung. Highest expression is seen in brain and placenta. Loss of expression is seen in some breast, cervical, hepatocellular, lung, thyroid, gastric and renal cell-cancer lines. Highly expressed in secretory cell lines. Expressed in almost all regions of the brain, in cerebellum, anterior frontal cortex, and striatum.

It is found in the cytoplasm. The protein localises to the golgi apparatus membrane. Functionally, may play an important role in the development of cancers in a broad range of tissues. The sequence is that of Protein HID1 (HID1) from Homo sapiens (Human).